Consider the following 361-residue polypeptide: Peptide chain release factor 1 (361 aa).

Glutamine 237 is modified (N5-methylglutamine). The span at 283–296 shows a compositional bias: basic and acidic residues; it reads VEDEKRRSEEESTR. The tract at residues 283–305 is disordered; the sequence is VEDEKRRSEEESTRRNLVSSGDR.

Belongs to the prokaryotic/mitochondrial release factor family. In terms of processing, methylated by PrmC. Methylation increases the termination efficiency of RF1.

It localises to the cytoplasm. Peptide chain release factor 1 directs the termination of translation in response to the peptide chain termination codons UAG and UAA. The polypeptide is Peptide chain release factor 1 (Shewanella woodyi (strain ATCC 51908 / MS32)).